Here is a 493-residue protein sequence, read N- to C-terminus: Probable cytochrome P450 CYP36A1 (493 aa).

3 helical membrane passes run 1–21 (MLFA…CRFA), 60–80 (GGIF…YDML), and 290–310 (QLIV…IIVL). Cys440 serves as a coordination point for heme.

The protein belongs to the cytochrome P450 family. It depends on heme as a cofactor.

Its subcellular location is the membrane. Cytochromes P450 are a group of heme-thiolate monooxygenases. They oxidize a variety of structurally unrelated compounds, including steroids, fatty acids, and xenobiotics. The chain is Probable cytochrome P450 CYP36A1 (cyp-36A1) from Caenorhabditis elegans.